A 130-amino-acid polypeptide reads, in one-letter code: Small ribosomal subunit protein uS8 (130 aa).

This sequence belongs to the universal ribosomal protein uS8 family. As to quaternary structure, part of the 30S ribosomal subunit. Contacts proteins S5 and S12.

One of the primary rRNA binding proteins, it binds directly to 16S rRNA central domain where it helps coordinate assembly of the platform of the 30S subunit. The sequence is that of Small ribosomal subunit protein uS8 from Shigella boydii serotype 18 (strain CDC 3083-94 / BS512).